Consider the following 169-residue polypeptide: Glycine-rich RNA-binding protein GRP2A (169 aa).

An RRM domain is found at 8 to 86; it reads YRCFVGGLAW…RSITVNEAQS (79 aa). 2 disordered regions span residues 69 to 100 and 125 to 169; these read MNGQ…GGGG and YSGG…GGGW. A compositionally biased stretch (gly residues) spans 89–100; that stretch reads SGAGGGGRGGGG.

In terms of tissue distribution, predominantly expressed in meristematic and growing tissue.

The protein resides in the nucleus. Functionally, may play a general role in circadian phenomena associated with meristematic tissue. In Sinapis alba (White mustard), this protein is Glycine-rich RNA-binding protein GRP2A.